The sequence spans 846 residues: Translation initiation factor IF-2 (846 aa).

A tr-type G domain is found at 345-512 (SRAPVVTIMG…AVLLQSEVLE (168 aa)). The tract at residues 354–361 (GHVDHGKT) is G1. Position 354–361 (354–361 (GHVDHGKT)) interacts with GTP. Residues 379 to 383 (GITQH) form a G2 region. Residues 400–403 (DTPG) are G3. GTP is bound by residues 400–404 (DTPGH) and 454–457 (NKID). The tract at residues 454 to 457 (NKID) is G4. Residues 490–492 (SAK) form a G5 region.

It belongs to the TRAFAC class translation factor GTPase superfamily. Classic translation factor GTPase family. IF-2 subfamily.

Its subcellular location is the cytoplasm. Its function is as follows. One of the essential components for the initiation of protein synthesis. Protects formylmethionyl-tRNA from spontaneous hydrolysis and promotes its binding to the 30S ribosomal subunits. Also involved in the hydrolysis of GTP during the formation of the 70S ribosomal complex. The polypeptide is Translation initiation factor IF-2 (Francisella tularensis subsp. holarctica (strain FTNF002-00 / FTA)).